Consider the following 175-residue polypeptide: Large ribosomal subunit protein bL17m (175 aa).

Residues 1–8 constitute a mitochondrion transit peptide; it reads MRLSVAAA. The segment at 155–175 is disordered; that stretch reads DLRQSQEASNHSSHTAQTPGI. Positions 161 to 175 are enriched in polar residues; that stretch reads EASNHSSHTAQTPGI.

Belongs to the bacterial ribosomal protein bL17 family. Component of the mitochondrial large ribosomal subunit (mt-LSU). Mature mammalian 55S mitochondrial ribosomes consist of a small (28S) and a large (39S) subunit. The 28S small subunit contains a 12S ribosomal RNA (12S mt-rRNA) and 30 different proteins. The 39S large subunit contains a 16S rRNA (16S mt-rRNA), a copy of mitochondrial valine transfer RNA (mt-tRNA(Val)), which plays an integral structural role, and 52 different proteins. Detected in adrenal gland, mammary gland and adipose tissue.

It localises to the mitochondrion. The polypeptide is Large ribosomal subunit protein bL17m (MRPL17) (Homo sapiens (Human)).